Here is a 370-residue protein sequence, read N- to C-terminus: UDP-N-acetylglucosamine--N-acetylmuramyl-(pentapeptide) pyrophosphoryl-undecaprenol N-acetylglucosamine transferase (370 aa).

UDP-N-acetyl-alpha-D-glucosamine-binding positions include 10–12, Asn-124, Ser-196, Ile-253, and Gln-298; that span reads TGG.

The protein belongs to the glycosyltransferase 28 family. MurG subfamily.

It is found in the cell membrane. The catalysed reaction is Mur2Ac(oyl-L-Ala-gamma-D-Glu-L-Lys-D-Ala-D-Ala)-di-trans,octa-cis-undecaprenyl diphosphate + UDP-N-acetyl-alpha-D-glucosamine = beta-D-GlcNAc-(1-&gt;4)-Mur2Ac(oyl-L-Ala-gamma-D-Glu-L-Lys-D-Ala-D-Ala)-di-trans,octa-cis-undecaprenyl diphosphate + UDP + H(+). The protein operates within cell wall biogenesis; peptidoglycan biosynthesis. In terms of biological role, cell wall formation. Catalyzes the transfer of a GlcNAc subunit on undecaprenyl-pyrophosphoryl-MurNAc-pentapeptide (lipid intermediate I) to form undecaprenyl-pyrophosphoryl-MurNAc-(pentapeptide)GlcNAc (lipid intermediate II). This chain is UDP-N-acetylglucosamine--N-acetylmuramyl-(pentapeptide) pyrophosphoryl-undecaprenol N-acetylglucosamine transferase, found in Limosilactobacillus reuteri subsp. reuteri (strain JCM 1112) (Lactobacillus reuteri).